We begin with the raw amino-acid sequence, 341 residues long: Methionine import ATP-binding protein MetN 1 (341 aa).

One can recognise an ABC transporter domain in the interval 2-241 (IEFRQVSKSF…PKTTIAQNFV (240 aa)). Residue 38–45 (GYSGAGKS) coordinates ATP.

The protein belongs to the ABC transporter superfamily. Methionine importer (TC 3.A.1.24) family. In terms of assembly, the complex is composed of two ATP-binding proteins (MetN), two transmembrane proteins (MetI) and a solute-binding protein (MetQ).

The protein localises to the cell membrane. The enzyme catalyses L-methionine(out) + ATP + H2O = L-methionine(in) + ADP + phosphate + H(+). It carries out the reaction D-methionine(out) + ATP + H2O = D-methionine(in) + ADP + phosphate + H(+). Functionally, part of the ABC transporter complex MetNIQ involved in methionine import. Responsible for energy coupling to the transport system. The chain is Methionine import ATP-binding protein MetN 1 from Staphylococcus aureus (strain MRSA252).